A 100-amino-acid polypeptide reads, in one-letter code: Large ribosomal subunit protein uL23 (100 aa).

The protein belongs to the universal ribosomal protein uL23 family. In terms of assembly, part of the 50S ribosomal subunit. Contacts protein L29, and trigger factor when it is bound to the ribosome.

Its function is as follows. One of the early assembly proteins it binds 23S rRNA. One of the proteins that surrounds the polypeptide exit tunnel on the outside of the ribosome. Forms the main docking site for trigger factor binding to the ribosome. The polypeptide is Large ribosomal subunit protein uL23 (Thermotoga sp. (strain RQ2)).